Consider the following 641-residue polypeptide: Tetracycline resistance protein TetS (641 aa).

Positions 1–242 constitute a tr-type G domain; that stretch reads MKIINIGILA…VITSKLFSPT (242 aa). GTP-binding positions include 10–17, 74–78, and 128–131; these read AHVDAGKT, DTPGH, and NKID.

The protein belongs to the TRAFAC class translation factor GTPase superfamily. Classic translation factor GTPase family. TetM/TetO subfamily.

Its function is as follows. Abolishes the inhibitory effect of tetracyclin on protein synthesis by a non-covalent modification of the ribosomes. This is Tetracycline resistance protein TetS (tetS) from Listeria monocytogenes.